Reading from the N-terminus, the 500-residue chain is Glutamate--tRNA ligase (500 aa).

The 'HIGH' region signature appears at 12–22 (PSPTGHLHIGN). The short motif at 259–263 (KLSKR) is the 'KMSKS' region element. ATP is bound at residue lysine 262.

It belongs to the class-I aminoacyl-tRNA synthetase family. Glutamate--tRNA ligase type 1 subfamily. Monomer.

It is found in the cytoplasm. It catalyses the reaction tRNA(Glu) + L-glutamate + ATP = L-glutamyl-tRNA(Glu) + AMP + diphosphate. In terms of biological role, catalyzes the attachment of glutamate to tRNA(Glu) in a two-step reaction: glutamate is first activated by ATP to form Glu-AMP and then transferred to the acceptor end of tRNA(Glu). The polypeptide is Glutamate--tRNA ligase (Lactobacillus delbrueckii subsp. bulgaricus (strain ATCC BAA-365 / Lb-18)).